The following is a 97-amino-acid chain: Aspartyl/glutamyl-tRNA(Asn/Gln) amidotransferase subunit C (97 aa).

This sequence belongs to the GatC family. Heterotrimer of A, B and C subunits.

The enzyme catalyses L-glutamyl-tRNA(Gln) + L-glutamine + ATP + H2O = L-glutaminyl-tRNA(Gln) + L-glutamate + ADP + phosphate + H(+). The catalysed reaction is L-aspartyl-tRNA(Asn) + L-glutamine + ATP + H2O = L-asparaginyl-tRNA(Asn) + L-glutamate + ADP + phosphate + 2 H(+). Allows the formation of correctly charged Asn-tRNA(Asn) or Gln-tRNA(Gln) through the transamidation of misacylated Asp-tRNA(Asn) or Glu-tRNA(Gln) in organisms which lack either or both of asparaginyl-tRNA or glutaminyl-tRNA synthetases. The reaction takes place in the presence of glutamine and ATP through an activated phospho-Asp-tRNA(Asn) or phospho-Glu-tRNA(Gln). In Prochlorococcus marinus (strain AS9601), this protein is Aspartyl/glutamyl-tRNA(Asn/Gln) amidotransferase subunit C.